The sequence spans 93 residues: Small ribosomal subunit protein uS19 (93 aa).

The protein belongs to the universal ribosomal protein uS19 family.

In terms of biological role, protein S19 forms a complex with S13 that binds strongly to the 16S ribosomal RNA. The sequence is that of Small ribosomal subunit protein uS19 from Alkaliphilus metalliredigens (strain QYMF).